We begin with the raw amino-acid sequence, 78 residues long: Acyl carrier protein (78 aa).

Positions 2–77 constitute a Carrier domain; that stretch reads SDIAERVKKI…DAVKFIEKAQ (76 aa). Ser-37 is subject to O-(pantetheine 4'-phosphoryl)serine.

The protein belongs to the acyl carrier protein (ACP) family. 4'-phosphopantetheine is transferred from CoA to a specific serine of apo-ACP by AcpS. This modification is essential for activity because fatty acids are bound in thioester linkage to the sulfhydryl of the prosthetic group.

It localises to the cytoplasm. Its pathway is lipid metabolism; fatty acid biosynthesis. In terms of biological role, carrier of the growing fatty acid chain in fatty acid biosynthesis. In Sinorhizobium fredii (strain NBRC 101917 / NGR234), this protein is Acyl carrier protein.